The primary structure comprises 275 residues: Energy-coupling factor transporter ATP-binding protein EcfA1 (275 aa).

An ABC transporter domain is found at 5–240; that stretch reads IDVKNLSFRY…NDLDQIGLDD (236 aa). 40–47 is an ATP binding site; the sequence is GHNGSGKS.

The protein belongs to the ABC transporter superfamily. Energy-coupling factor EcfA family. In terms of assembly, forms a stable energy-coupling factor (ECF) transporter complex composed of 2 membrane-embedded substrate-binding proteins (S component), 2 ATP-binding proteins (A component) and 2 transmembrane proteins (T component).

Its subcellular location is the cell membrane. Functionally, ATP-binding (A) component of a common energy-coupling factor (ECF) ABC-transporter complex. Unlike classic ABC transporters this ECF transporter provides the energy necessary to transport a number of different substrates. The chain is Energy-coupling factor transporter ATP-binding protein EcfA1 from Streptococcus pneumoniae serotype 4 (strain ATCC BAA-334 / TIGR4).